The primary structure comprises 237 residues: Ras-related protein RABA3 (237 aa).

35-42 (GDSAVGKT) is a binding site for GTP. The Effector region signature appears at 57–65 (SKSTIGVEF). Residues 83-87 (DTAGQ), 141-144 (NKAD), and 172-173 (SA) contribute to the GTP site. 2 S-geranylgeranyl cysteine lipidation sites follow: cysteine 235 and cysteine 237. Cysteine 237 is modified (cysteine methyl ester).

It belongs to the small GTPase superfamily. Rab family. As to expression, expressed in root tips.

Its subcellular location is the endosome membrane. It localises to the golgi apparatus. It is found in the trans-Golgi network membrane. Intracellular vesicle trafficking and protein transport. The polypeptide is Ras-related protein RABA3 (RABA3) (Arabidopsis thaliana (Mouse-ear cress)).